The primary structure comprises 426 residues: Glucose-6-phosphate isomerase (426 aa).

Residue E276 is the Proton donor of the active site. Active-site residues include H297 and K413.

The protein belongs to the GPI family.

The protein resides in the cytoplasm. The enzyme catalyses alpha-D-glucose 6-phosphate = beta-D-fructose 6-phosphate. It participates in carbohydrate biosynthesis; gluconeogenesis. It functions in the pathway carbohydrate degradation; glycolysis; D-glyceraldehyde 3-phosphate and glycerone phosphate from D-glucose: step 2/4. In terms of biological role, catalyzes the reversible isomerization of glucose-6-phosphate to fructose-6-phosphate. The chain is Glucose-6-phosphate isomerase from Mesoplasma florum (strain ATCC 33453 / NBRC 100688 / NCTC 11704 / L1) (Acholeplasma florum).